The chain runs to 233 residues: Homeobox protein EMX1 (233 aa).

Positions 135 to 194 (PKRIRTAFSPSQLLRLERAFEKNHYVVGAERKQLASSLSLSETQVKVWFQNRRTKYKRQK) form a DNA-binding region, homeobox. The disordered stretch occupies residues 192 to 233 (RQKLEEEGPDSDQKKKGSHHINRWRLATKQPNGEDIDVTSND). Residues 193-206 (QKLEEEGPDSDQKK) show a composition bias toward basic and acidic residues.

It belongs to the EMX homeobox family.

Its subcellular location is the nucleus. May function in combinations with OTX1/2 to specify cell fates in the developing central nervous system. In Xenopus tropicalis (Western clawed frog), this protein is Homeobox protein EMX1 (emx1).